The chain runs to 131 residues: Ribonuclease P protein component (131 aa).

Belongs to the RnpA family. In terms of assembly, consists of a catalytic RNA component (M1 or rnpB) and a protein subunit.

The enzyme catalyses Endonucleolytic cleavage of RNA, removing 5'-extranucleotides from tRNA precursor.. RNaseP catalyzes the removal of the 5'-leader sequence from pre-tRNA to produce the mature 5'-terminus. It can also cleave other RNA substrates such as 4.5S RNA. The protein component plays an auxiliary but essential role in vivo by binding to the 5'-leader sequence and broadening the substrate specificity of the ribozyme. This Stutzerimonas stutzeri (strain A1501) (Pseudomonas stutzeri) protein is Ribonuclease P protein component.